The sequence spans 185 residues: HTH-type transcriptional regulator Hpr (185 aa).

An HTH marR-type domain is found at 13–157 (AMIFSQRIAQ…LIAILRNIYG (145 aa)). Positions 63-86 (ISEIAKFGVMHVSTAFNFSKKLEE) form a DNA-binding region, H-T-H motif.

Homodimer.

Its function is as follows. Negative regulator of protease production and sporulation. The polypeptide is HTH-type transcriptional regulator Hpr (Bacillus anthracis (strain CDC 684 / NRRL 3495)).